Reading from the N-terminus, the 165-residue chain is uncharacterized protein (165 aa).

Positions 1–36 (MTRLCLPRPEAREDPIPVPPRGLGAGEGSGSPVRPP) are disordered. Residues 135–155 (LLLLMGLGPLLRACGMPLTLL) form a helical membrane-spanning segment.

The protein localises to the membrane. This is an uncharacterized protein from Homo sapiens (Human).